The chain runs to 232 residues: Peptide deformylase (232 aa).

Fe cation-binding residues include Cys-135 and His-178. Glu-179 is a catalytic residue. His-182 is a binding site for Fe cation.

This sequence belongs to the polypeptide deformylase family. Fe(2+) serves as cofactor.

It catalyses the reaction N-terminal N-formyl-L-methionyl-[peptide] + H2O = N-terminal L-methionyl-[peptide] + formate. Removes the formyl group from the N-terminal Met of newly synthesized proteins. Requires at least a dipeptide for an efficient rate of reaction. N-terminal L-methionine is a prerequisite for activity but the enzyme has broad specificity at other positions. The sequence is that of Peptide deformylase from Deinococcus radiodurans (strain ATCC 13939 / DSM 20539 / JCM 16871 / CCUG 27074 / LMG 4051 / NBRC 15346 / NCIMB 9279 / VKM B-1422 / R1).